The chain runs to 481 residues: Glutamyl-tRNA(Gln) amidotransferase subunit A (481 aa).

Residues K76 and S151 each act as charge relay system in the active site. S175 functions as the Acyl-ester intermediate in the catalytic mechanism.

Belongs to the amidase family. GatA subfamily. As to quaternary structure, heterotrimer of A, B and C subunits.

The enzyme catalyses L-glutamyl-tRNA(Gln) + L-glutamine + ATP + H2O = L-glutaminyl-tRNA(Gln) + L-glutamate + ADP + phosphate + H(+). In terms of biological role, allows the formation of correctly charged Gln-tRNA(Gln) through the transamidation of misacylated Glu-tRNA(Gln) in organisms which lack glutaminyl-tRNA synthetase. The reaction takes place in the presence of glutamine and ATP through an activated gamma-phospho-Glu-tRNA(Gln). The chain is Glutamyl-tRNA(Gln) amidotransferase subunit A from Neisseria gonorrhoeae (strain NCCP11945).